The sequence spans 229 residues: PKHD-type hydroxylase BRADO4652 (229 aa).

The Fe2OG dioxygenase domain occupies 78-180 (QIFPPLFNRY…RVASFFWMQS (103 aa)). Fe cation is bound by residues histidine 98, aspartate 100, and histidine 161. Arginine 171 lines the 2-oxoglutarate pocket.

It depends on Fe(2+) as a cofactor. Requires L-ascorbate as cofactor.

This is PKHD-type hydroxylase BRADO4652 from Bradyrhizobium sp. (strain ORS 278).